A 705-amino-acid chain; its full sequence is Probable glutamate carboxypeptidase AMP1 (705 aa).

At 1–24 (MSQPLTTRPTVTGISIIPFRQPPP) the chain is on the cytoplasmic side. A helical; Signal-anchor for type II membrane protein transmembrane segment spans residues 25 to 42 (LCSFLFVIVLFVATFYTL). Topologically, residues 43–705 (HHPDAVTPPL…ASKALKGGFT (663 aa)) are extracellular. N-linked (GlcNAc...) asparagine glycans are attached at residues Asn-74, Asn-137, and Asn-322. Residues 255–548 (GVVGGEKLSL…GIWGLLGILL (294 aa)) are catalytic. Zn(2+) contacts are provided by His-356 and Asp-366. Catalysis depends on Glu-403, which acts as the Nucleophile. 3 residues coordinate Zn(2+): Glu-404, Asp-432, and His-514. Residue Asn-676 is glycosylated (N-linked (GlcNAc...) asparagine).

This sequence belongs to the peptidase M28 family. M28B subfamily. Zn(2+) serves as cofactor. Expressed in all plant parts. Highest levels in the bolt stem, inflorescence, root and silique. Low level in leaves.

Its subcellular location is the endoplasmic reticulum membrane. The enzyme catalyses Release of an unsubstituted, C-terminal glutamyl residue, typically from Ac-Asp-Glu or folylpoly-gamma-glutamates.. May modulate the level of one or more small signaling molecules that have a role in regulating meristem function. May play a role in balancing and restricting the meristem-promoting activity of auxin signaling. Involved in ethylene and giberellin (GA) signaling pathways or in a parallel pathway controlling cell and hypocotyl elongation and cellular organization. Involved in abscisic acid (ABA) signaling pathway. Plays a negative role in ABA-mediated seed germination and seedling development. Acts in association with LAMP1 to suppress ectopic stem cell niche formation in the shoot apical meristem (SAM) independently of cytokinin signaling pathway. Modulates responses to ABA, oxidative stress and abotic stress. Acts as a negative regulator of the ABA signaling pathway to modulate freezing and drought stress responses. Mediates carbon and amino acid metabolism. May be involved in the acquisition and/or maintenance of seed dormancy. Involved in the regulation of response to heat shock and plant defense. In Arabidopsis thaliana (Mouse-ear cress), this protein is Probable glutamate carboxypeptidase AMP1.